Reading from the N-terminus, the 286-residue chain is Diaminopimelate epimerase (286 aa).

Substrate is bound by residues N22, Q56, and N76. C85 serves as the catalytic Proton donor. Substrate contacts are provided by residues G86 to N87, N169, N202, and E220 to R221. Catalysis depends on C229, which acts as the Proton acceptor. G230 to S231 is a binding site for substrate.

This sequence belongs to the diaminopimelate epimerase family. As to quaternary structure, homodimer.

The protein resides in the cytoplasm. The enzyme catalyses (2S,6S)-2,6-diaminopimelate = meso-2,6-diaminopimelate. It participates in amino-acid biosynthesis; L-lysine biosynthesis via DAP pathway; DL-2,6-diaminopimelate from LL-2,6-diaminopimelate: step 1/1. Its function is as follows. Catalyzes the stereoinversion of LL-2,6-diaminopimelate (L,L-DAP) to meso-diaminopimelate (meso-DAP), a precursor of L-lysine and an essential component of the bacterial peptidoglycan. This Buchnera aphidicola subsp. Baizongia pistaciae (strain Bp) protein is Diaminopimelate epimerase.